A 285-amino-acid polypeptide reads, in one-letter code: Eukaryotic translation initiation factor 3 subunit F-2 (285 aa).

An MPN domain is found at 11–145 (VFLKPLVLFQ…TRLYCAVEMG (135 aa)).

The protein belongs to the eIF-3 subunit F family. As to quaternary structure, component of the eukaryotic translation initiation factor 3 (eIF-3) complex. The eIF-3 complex interacts with pix.

Its subcellular location is the cytoplasm. In terms of biological role, component of the eukaryotic translation initiation factor 3 (eIF-3) complex, which is involved in protein synthesis of a specialized repertoire of mRNAs and, together with other initiation factors, stimulates binding of mRNA and methionyl-tRNAi to the 40S ribosome. The eIF-3 complex specifically targets and initiates translation of a subset of mRNAs involved in cell proliferation. This Drosophila simulans (Fruit fly) protein is Eukaryotic translation initiation factor 3 subunit F-2.